A 1331-amino-acid chain; its full sequence is Mitogen-activated protein kinase kinase kinase 15 (1331 aa).

Gly residues predominate over residues 1-13 (MEGGGGSGGGGGP). The tract at residues 1-61 (MEGGGGSGGG…GEAEGGRGPR (61 aa)) is disordered. Positions 656-912 (NGERVVLGKG…AADLLQEGFL (257 aa)) constitute a Protein kinase domain. Residues 662–670 (LGKGSYGIV) and Lys685 contribute to the ATP site. Catalysis depends on Asp777, which acts as the Proton acceptor. Disordered regions lie at residues 934 to 964 (GTGT…SDAQ) and 983 to 1005 (LSVP…EERD). The span at 940–962 (LPSSGELVGSSSSEHGSISPDSD) shows a compositional bias: low complexity. Residues 992–1005 (LDDRSTALPPEERD) are compositionally biased toward basic and acidic residues. Positions 1216 to 1236 (LVQKEREYQNLLRLILDQKTQ) form a coiled coil.

Belongs to the protein kinase superfamily. STE Ser/Thr protein kinase family. MAP kinase kinase kinase subfamily. The cofactor is Mg(2+).

It carries out the reaction L-seryl-[protein] + ATP = O-phospho-L-seryl-[protein] + ADP + H(+). The catalysed reaction is L-threonyl-[protein] + ATP = O-phospho-L-threonyl-[protein] + ADP + H(+). Contains an N-terminal autoinhibitory domain. Activated by phosphorylation at Thr-816, inhibited by phosphorylation at Ser-928. In terms of biological role, serine/threonine kinase which acts as a component of the MAP kinase signal transduction pathway. Once activated, acts as an upstream activator of the p38 MAPK signal transduction cascade through the phosphorylation and activation of several MAP kinase kinases. May function in a signal transduction pathway that is activated by various cell stresses and leads to apoptosis. Involved in phosphorylation of WNK4 in response to osmotic stress or hypotonic low-chloride stimulation via the p38 MAPK signal transduction cascade. This chain is Mitogen-activated protein kinase kinase kinase 15, found in Mus musculus (Mouse).